We begin with the raw amino-acid sequence, 414 residues long: Tryptophan synthase beta chain (414 aa).

Lysine 108 is modified (N6-(pyridoxal phosphate)lysine).

This sequence belongs to the TrpB family. Tetramer of two alpha and two beta chains. Pyridoxal 5'-phosphate is required as a cofactor.

The catalysed reaction is (1S,2R)-1-C-(indol-3-yl)glycerol 3-phosphate + L-serine = D-glyceraldehyde 3-phosphate + L-tryptophan + H2O. Its pathway is amino-acid biosynthesis; L-tryptophan biosynthesis; L-tryptophan from chorismate: step 5/5. Functionally, the beta subunit is responsible for the synthesis of L-tryptophan from indole and L-serine. This Beijerinckia indica subsp. indica (strain ATCC 9039 / DSM 1715 / NCIMB 8712) protein is Tryptophan synthase beta chain.